The sequence spans 516 residues: L-amino acid oxidase (516 aa).

An N-terminal signal peptide occupies residues Met-1–Cys-18. FAD is bound by residues Met-61–Ser-62, Glu-81–Ala-82, Arg-89, and Gly-105–Arg-108. Residue Arg-108 coordinates substrate. The N-linked (GlcNAc...) asparagine glycan is linked to Asn-190. Position 279 (Val-279) interacts with FAD. N-linked (GlcNAc...) asparagine glycans are attached at residues Asn-299 and Asn-404. An intrachain disulfide couples Cys-349 to Cys-430. Residues Glu-475 and Gly-482–Thr-487 contribute to the FAD site. Residue Gly-482–Trp-483 coordinates substrate.

The protein belongs to the flavin monoamine oxidase family. FIG1 subfamily. In terms of assembly, homodimer; non-covalently linked. Requires FAD as cofactor. In terms of processing, N-glycosylated (14%). The enzymatic activity remains unchanged after deglycosylation. In terms of tissue distribution, expressed by the venom gland.

The protein localises to the secreted. The catalysed reaction is an L-alpha-amino acid + O2 + H2O = a 2-oxocarboxylate + H2O2 + NH4(+). The enzyme catalyses L-leucine + O2 + H2O = 4-methyl-2-oxopentanoate + H2O2 + NH4(+). It catalyses the reaction L-phenylalanine + O2 + H2O = 3-phenylpyruvate + H2O2 + NH4(+). It carries out the reaction L-tryptophan + O2 + H2O = indole-3-pyruvate + H2O2 + NH4(+). The catalysed reaction is L-methionine + O2 + H2O = 4-methylsulfanyl-2-oxobutanoate + H2O2 + NH4(+). The enzyme catalyses L-isoleucine + O2 + H2O = (S)-3-methyl-2-oxopentanoate + H2O2 + NH4(+). Its activity is regulated as follows. Inhibited by the substrate analog N-acetyl tryptophan. Functionally, catalyzes an oxidative deamination of predominantly hydrophobic and aromatic L-amino acids, thus producing hydrogen peroxide that may contribute to the diverse toxic effects of this enzyme. Is highly active on L-Met&gt;L-Leu&gt;L-Phe&gt;L-Trp=L-Ile. Binds to the cell surface and enables the production of highly localized concentration of hydrogen peroxide in or near the binding interfaces. Does not bind to phospholipids. Induces platelet-rich plasma aggregation, shows cytotoxic effects on some cancer cell lines (B16-F10 (mouse melanoma), PC12 (rat pheochromocytoma), MCF-7 and MDA-MB-231 (human breast carcinoma)) and shows antibacterial activities against both Gram-positive and Gram-negative bacteria. Also exhibits hemorrhage and edema. Does not show cytotoxicity on erythrocytes and peripheral blood mononuclear cells. Its effect on platelets is controversial, since it either induces aggregation or inhibits agonist-induced aggregation. These different effects are probably due to different experimental conditions. The sequence is that of L-amino acid oxidase from Cerastes cerastes (Horned desert viper).